Consider the following 266-residue polypeptide: UPF0328 protein ECU05_1610/ECU11_0120 (266 aa).

This sequence belongs to the UPF0328 family.

The polypeptide is UPF0328 protein ECU05_1610/ECU11_0120 (Encephalitozoon cuniculi (strain GB-M1) (Microsporidian parasite)).